Consider the following 234-residue polypeptide: Large ribosomal subunit protein uL1 (234 aa).

It belongs to the universal ribosomal protein uL1 family. In terms of assembly, part of the 50S ribosomal subunit.

Functionally, binds directly to 23S rRNA. The L1 stalk is quite mobile in the ribosome, and is involved in E site tRNA release. Its function is as follows. Protein L1 is also a translational repressor protein, it controls the translation of the L11 operon by binding to its mRNA. The sequence is that of Large ribosomal subunit protein uL1 from Desulfosudis oleivorans (strain DSM 6200 / JCM 39069 / Hxd3) (Desulfococcus oleovorans).